Reading from the N-terminus, the 380-residue chain is 1-deoxy-D-xylulose 5-phosphate reductoisomerase (380 aa).

Positions 9, 10, 11, 12, 36, and 117 each coordinate NADPH. Position 118 (Lys118) interacts with 1-deoxy-D-xylulose 5-phosphate. NADPH is bound at residue Glu119. Asp139 contributes to the Mn(2+) binding site. Residues Ser140, Glu141, Ser165, and His188 each contribute to the 1-deoxy-D-xylulose 5-phosphate site. Glu141 provides a ligand contact to Mn(2+). Gly194 lines the NADPH pocket. The 1-deoxy-D-xylulose 5-phosphate site is built by Ser201, Asn206, Lys207, and Glu210. Glu210 is a binding site for Mn(2+).

It belongs to the DXR family. The cofactor is Mg(2+). Mn(2+) serves as cofactor.

It carries out the reaction 2-C-methyl-D-erythritol 4-phosphate + NADP(+) = 1-deoxy-D-xylulose 5-phosphate + NADPH + H(+). Its pathway is isoprenoid biosynthesis; isopentenyl diphosphate biosynthesis via DXP pathway; isopentenyl diphosphate from 1-deoxy-D-xylulose 5-phosphate: step 1/6. In terms of biological role, catalyzes the NADPH-dependent rearrangement and reduction of 1-deoxy-D-xylulose-5-phosphate (DXP) to 2-C-methyl-D-erythritol 4-phosphate (MEP). The sequence is that of 1-deoxy-D-xylulose 5-phosphate reductoisomerase from Aquifex aeolicus (strain VF5).